We begin with the raw amino-acid sequence, 1158 residues long: Hephaestin (1158 aa).

An N-terminal signal peptide occupies residues 1–23; sequence MESGHLLWALLFMQSLWPQLTDG. 6 consecutive Plastocyanin-like domains span residues 24 to 206, 218 to 366, 370 to 560, 570 to 718, 731 to 903, and 911 to 1067; these read ATRV…LITC, QRQD…VKSC, PPVD…LLVC, KQKG…VSQC, AARI…LAIC, and HGGR…SRTE. The Extracellular portion of the chain corresponds to 24–1110; sequence ATRVYYLGIR…PIKNVEMLAS (1087 aa). Gly70 and Tyr73 together coordinate Na(+). Residues His126 and His128 each coordinate Cu(2+). His126 contributes to the O2 binding site. Lys134, Asp152, and Asp153 together coordinate Ca(2+). N-linked (GlcNAc...) asparagine glycosylation is present at Asn164. A disulfide bond links Cys180 and Cys206. Residues His186 and His188 each contribute to the Cu(2+) site. His186 lines the O2 pocket. An N-linked (GlcNAc...) asparagine glycan is attached at Asn236. Ser265 serves as a coordination point for Na(+). A disulfide bond links Cys285 and Cys366. Cu(2+)-binding residues include His304, Cys347, and His352. Na(+) is bound by residues Phe416, Gly425, and Tyr428. Cys534 and Cys560 are joined by a disulfide. Residue Asn588 is glycosylated (N-linked (GlcNAc...) asparagine). Ser617 is a Na(+) binding site. Cys637 and Cys718 are disulfide-bonded. Cu(2+)-binding residues include His656, Cys699, His704, and Met709. Asn714 and Asn758 each carry an N-linked (GlcNAc...) asparagine glycan. Phe769 and Gly778 together coordinate Na(+). 2 N-linked (GlcNAc...) asparagine glycosylation sites follow: Asn829 and Asn873. A disulfide bridge links Cys877 with Cys903. Asn931 carries N-linked (GlcNAc...) asparagine glycosylation. Cu(2+) contacts are provided by His1000, His1003, His1005, His1045, Cys1046, His1047, His1051, and Met1056. His1003 and His1005 together coordinate O2. His1047 provides a ligand contact to O2. A helical transmembrane segment spans residues 1111 to 1131; the sequence is VLVAISVTLLLVVLALGGVVW. Topologically, residues 1132–1158 are cytoplasmic; that stretch reads YQHRQRKLRRNRRSILDDSFKLLSFKQ. Residues Ser1145, Ser1150, and Ser1155 each carry the phosphoserine modification.

This sequence belongs to the multicopper oxidase family. In terms of assembly, part of a complex composed of SLC40A1/ferroportin, TF/transferrin and HEPH/hephaestin that transfers iron from cells to transferrin. Cu cation is required as a cofactor. In terms of tissue distribution, expressed by intestinal absorptive cells (at protein level). Also detected in breast, colon, bone trabecular cells and fibroblasts.

The protein localises to the basolateral cell membrane. The enzyme catalyses 4 Fe(2+) + O2 + 4 H(+) = 4 Fe(3+) + 2 H2O. Its function is as follows. Plasma membrane ferroxidase that mediates the extracellular conversion of ferrous/Fe(2+) iron into its ferric/Fe(3+) form. Couples ferroportin which specifically exports ferrous/Fe(2+) iron from cells to transferrin that only binds and shuttles extracellular ferric/Fe(3+) iron throughout the body. By helping iron transfer from cells to blood mainly contributes to dietary iron absorption by the intestinal epithelium and more generally regulates iron levels in the body. The polypeptide is Hephaestin (Homo sapiens (Human)).